Here is a 188-residue protein sequence, read N- to C-terminus: Small ribosomal subunit protein uS7 (188 aa).

This sequence belongs to the universal ribosomal protein uS7 family. Part of the 30S ribosomal subunit.

One of the primary rRNA binding proteins, it binds directly to 16S rRNA where it nucleates assembly of the head domain of the 30S subunit. Is located at the subunit interface close to the decoding center. The sequence is that of Small ribosomal subunit protein uS7 from Methanococcus maripaludis (strain C6 / ATCC BAA-1332).